We begin with the raw amino-acid sequence, 151 residues long: 4-hydroxybenzoyl-CoA thioesterase (151 aa).

The active site involves glutamate 73. A substrate-binding site is contributed by 100-102 (FFR).

This sequence belongs to the thioesterase PaaI family. As to quaternary structure, homotetramer.

It carries out the reaction 4-hydroxybenzoyl-CoA + H2O = 4-hydroxybenzoate + CoA + H(+). The protein operates within xenobiotic degradation; 4-chlorobenzoate degradation; 4-hydroxybenzoate from 4-chlorobenzoate: step 3/3. This Arthrobacter globiformis protein is 4-hydroxybenzoyl-CoA thioesterase.